The sequence spans 147 residues: Heavy metal-associated isoprenylated plant protein 27 (147 aa).

The 65-residue stretch at 18 to 82 (FQKVEIKVKM…VMHRTGKKAE (65 aa)) folds into the HMA domain. Residues cysteine 29 and cysteine 32 each coordinate a metal cation. Cysteine 144 is subject to Cysteine methyl ester. The S-farnesyl cysteine moiety is linked to residue cysteine 144. The propeptide at 145 to 147 (TIM) is removed in mature form.

Belongs to the HIPP family. In terms of assembly, interacts with UBP16. Interacts with ZHD11/HB29.

The protein localises to the membrane. Functionally, heavy-metal-binding protein. Binds cadmium. May be involved in cadmium transport and play a role in cadmium detoxification. This chain is Heavy metal-associated isoprenylated plant protein 27, found in Arabidopsis thaliana (Mouse-ear cress).